The chain runs to 197 residues: Recombination protein RecR (197 aa).

The C4-type zinc-finger motif lies at 57–72 (CSICFAITEDDPCAIC). The 96-residue stretch at 79–174 (GTICVVENSQ…RISRLAHGIP (96 aa)) folds into the Toprim domain.

Belongs to the RecR family.

May play a role in DNA repair. It seems to be involved in an RecBC-independent recombinational process of DNA repair. It may act with RecF and RecO. In Pelobacter propionicus (strain DSM 2379 / NBRC 103807 / OttBd1), this protein is Recombination protein RecR.